Here is a 347-residue protein sequence, read N- to C-terminus: Zinc finger protein CONSTANS-LIKE 2 (347 aa).

8 residues coordinate Zn(2+): Cys-16, Cys-19, Cys-39, His-44, Cys-59, Cys-62, Cys-82, and His-87. A B box-type 1; atypical zinc finger spans residues 16 to 58; that stretch reads CDTCRSAACTVYCEADSAYLCTTCDARVHAANRVASRHERVRV. The segment at 59–101 adopts a B box-type 2; atypical zinc-finger fold; sequence CQSCESAPAAFLCKADAASLCTACDAEIHSANPLARRHQRVPI. A CCT domain is found at 278–320; sequence REARVLRYREKKKTRKFDKTIRYASRKAYAEIRPRIKGRFAKR.

This sequence belongs to the CONSTANS family. In terms of tissue distribution, highly expressed in leaves. Expressed at lower levels in stems, flowers and siliques. Not detected in roots.

Its subcellular location is the nucleus. In terms of biological role, putative transcription factor. Does not affect flowering time. The sequence is that of Zinc finger protein CONSTANS-LIKE 2 (COL2) from Arabidopsis thaliana (Mouse-ear cress).